A 387-amino-acid chain; its full sequence is Xylose operon regulatory protein (387 aa).

Residues 288–386 form the HTH araC/xylS-type domain; that stretch reads IQAMHYIRHR…EMTPKEFRLN (99 aa). 2 DNA-binding regions (H-T-H motif) span residues 305-326 and 353-376; these read GQVL…KNEM and IKEI…KKEF.

In terms of biological role, regulatory protein for the xylBAFGHR operon. In Haemophilus influenzae (strain ATCC 51907 / DSM 11121 / KW20 / Rd), this protein is Xylose operon regulatory protein (xylR).